A 465-amino-acid chain; its full sequence is Ribosomal protein uS12 methylthiotransferase RimO (465 aa).

Residues 1–117 form the MTTase N-terminal domain; the sequence is MKVGFISLGC…IVDICEGMPP (117 aa). Positions 10, 46, 80, 150, 154, and 157 each coordinate [4Fe-4S] cluster. The Radical SAM core domain maps to 136 to 369; sequence ATPRHFAYMK…AIQRKIARAR (234 aa). The TRAM domain occupies 371-442; that stretch reads RGLVGKEVPV…DYDVVGTLLA (72 aa).

It belongs to the methylthiotransferase family. RimO subfamily. The cofactor is [4Fe-4S] cluster.

It is found in the cytoplasm. It catalyses the reaction L-aspartate(89)-[ribosomal protein uS12]-hydrogen + (sulfur carrier)-SH + AH2 + 2 S-adenosyl-L-methionine = 3-methylsulfanyl-L-aspartate(89)-[ribosomal protein uS12]-hydrogen + (sulfur carrier)-H + 5'-deoxyadenosine + L-methionine + A + S-adenosyl-L-homocysteine + 2 H(+). Its function is as follows. Catalyzes the methylthiolation of an aspartic acid residue of ribosomal protein uS12. This is Ribosomal protein uS12 methylthiotransferase RimO from Solibacter usitatus (strain Ellin6076).